We begin with the raw amino-acid sequence, 411 residues long: Serine hydroxymethyltransferase (411 aa).

Residues leucine 119 and 123 to 125 each bind (6S)-5,6,7,8-tetrahydrofolate; that span reads GHL. Lysine 228 bears the N6-(pyridoxal phosphate)lysine mark. A (6S)-5,6,7,8-tetrahydrofolate-binding site is contributed by 351–353; it reads SPF.

This sequence belongs to the SHMT family. As to quaternary structure, homodimer. It depends on pyridoxal 5'-phosphate as a cofactor.

The protein localises to the cytoplasm. The enzyme catalyses (6R)-5,10-methylene-5,6,7,8-tetrahydrofolate + glycine + H2O = (6S)-5,6,7,8-tetrahydrofolate + L-serine. Its pathway is one-carbon metabolism; tetrahydrofolate interconversion. The protein operates within amino-acid biosynthesis; glycine biosynthesis; glycine from L-serine: step 1/1. Its function is as follows. Catalyzes the reversible interconversion of serine and glycine with tetrahydrofolate (THF) serving as the one-carbon carrier. This reaction serves as the major source of one-carbon groups required for the biosynthesis of purines, thymidylate, methionine, and other important biomolecules. Also exhibits THF-independent aldolase activity toward beta-hydroxyamino acids, producing glycine and aldehydes, via a retro-aldol mechanism. This chain is Serine hydroxymethyltransferase, found in Clostridium novyi (strain NT).